We begin with the raw amino-acid sequence, 279 residues long: MSTLLIGDVHGCYHELRDLLSLADFDPARDTLWLTGDLVARGPDSLAVLRYVKSLGDSARLVLGNHDLHLLAIYAGISRNKPKDKLTPLLEAPDADSLINWLRRQPVLQVDNDLCLVMAHAGISPQWDLTTAQRCAREVEAMLASDSYPFFLNAMYGDMPNNWSESLSGLARLRFTTNALTRMRYCFPGGELDMICKDAPEDAPAPLRPWFDLDSPVREAGYSIAFGHWASLEGRSTPPQVYALDTGCCWGGTLTALRWEDRHSFSVPSRRASRHAKAE.

The protein belongs to the Ap4A hydrolase family.

It catalyses the reaction P(1),P(4)-bis(5'-adenosyl) tetraphosphate + H2O = 2 ADP + 2 H(+). Hydrolyzes diadenosine 5',5'''-P1,P4-tetraphosphate to yield ADP. This Edwardsiella ictaluri (strain 93-146) protein is Bis(5'-nucleosyl)-tetraphosphatase, symmetrical.